The following is a 495-amino-acid chain: Cysteine--tRNA ligase (495 aa).

A Zn(2+)-binding site is contributed by Cys-29. The 'HIGH' region motif lies at Val-31–His-41. The Zn(2+) site is built by Cys-209, His-234, and Glu-238. The 'KMSKS' region motif lies at Lys-266 to Ser-270. ATP is bound at residue Lys-269.

Belongs to the class-I aminoacyl-tRNA synthetase family. In terms of assembly, monomer. Zn(2+) is required as a cofactor.

It localises to the cytoplasm. The catalysed reaction is tRNA(Cys) + L-cysteine + ATP = L-cysteinyl-tRNA(Cys) + AMP + diphosphate. The chain is Cysteine--tRNA ligase (cysS) from Aquifex aeolicus (strain VF5).